We begin with the raw amino-acid sequence, 251 residues long: Transcription initiation factor TFIID subunit 9B (251 aa).

Met-1 is modified (N-acetylmethionine). Ser-147 bears the Phosphoserine mark. Phosphothreonine occurs at positions 159 and 174. Phosphoserine is present on Ser-177. The tract at residues 229–251 (QNTANEANPLKRKHEDDDDNDIM) is disordered.

This sequence belongs to the TAF9 family. Binds TAF5 and TAF6. Component of TFIID and the TATA-binding protein-free TAF complex (TFTC). TFIID is composed of TATA binding protein (TBP) and a number of TBP-associated factors (TAFs). Binds N-terminal domain of p53/TP53 which is essential for transcription.

The protein localises to the nucleus. Essential for cell viability. TAF9 and TAF9B are involved in transcriptional activation as well as repression of distinct but overlapping sets of genes. May have a role in gene regulation associated with apoptosis. TAFs are components of the transcription factor IID (TFIID) complex, the TBP-free TAFII complex (TFTC), the PCAF histone acetylase complex and the STAGA transcription coactivator-HAT complex. TFIID or TFTC are essential for the regulation of RNA polymerase II-mediated transcription. This chain is Transcription initiation factor TFIID subunit 9B (TAF9B), found in Homo sapiens (Human).